Here is a 429-residue protein sequence, read N- to C-terminus: Glutamate-1-semialdehyde 2,1-aminomutase 2 (429 aa).

Position 268 is an N6-(pyridoxal phosphate)lysine (Lys268).

The protein belongs to the class-III pyridoxal-phosphate-dependent aminotransferase family. HemL subfamily. As to quaternary structure, homodimer. Pyridoxal 5'-phosphate is required as a cofactor.

It is found in the cytoplasm. It carries out the reaction (S)-4-amino-5-oxopentanoate = 5-aminolevulinate. It functions in the pathway porphyrin-containing compound metabolism; protoporphyrin-IX biosynthesis; 5-aminolevulinate from L-glutamyl-tRNA(Glu): step 2/2. This chain is Glutamate-1-semialdehyde 2,1-aminomutase 2, found in Bacillus cereus (strain AH187).